A 310-amino-acid chain; its full sequence is Cytosolic Fe-S cluster assembly factor Nubp1 homolog (310 aa).

4 residues coordinate [4Fe-4S] cluster: Cys-9, Cys-23, Cys-26, and Cys-32. 63-70 serves as a coordination point for ATP; sequence GKGGVGKS. [4Fe-4S] cluster-binding residues include Cys-240 and Cys-243.

The protein belongs to the Mrp/NBP35 ATP-binding proteins family. NUBP1/NBP35 subfamily. As to quaternary structure, heterotetramer of 2 Nubp1 and 2 Nubp2 chains. [4Fe-4S] cluster serves as cofactor.

The protein localises to the cytoplasm. Functionally, component of the cytosolic iron-sulfur (Fe/S) protein assembly (CIA) machinery. Required for maturation of extramitochondrial Fe-S proteins. The Nubp1-Nubp2 heterotetramer forms a Fe-S scaffold complex, mediating the de novo assembly of an Fe-S cluster and its transfer to target apoproteins. The chain is Cytosolic Fe-S cluster assembly factor Nubp1 homolog from Drosophila virilis (Fruit fly).